A 170-amino-acid polypeptide reads, in one-letter code: NADH-quinone oxidoreductase subunit B (170 aa).

The [4Fe-4S] cluster site is built by cysteine 37, cysteine 38, cysteine 102, and cysteine 131.

This sequence belongs to the complex I 20 kDa subunit family. In terms of assembly, NDH-1 is composed of 14 different subunits. Subunits NuoB, C, D, E, F, and G constitute the peripheral sector of the complex. [4Fe-4S] cluster serves as cofactor.

It is found in the cell inner membrane. The enzyme catalyses a quinone + NADH + 5 H(+)(in) = a quinol + NAD(+) + 4 H(+)(out). In terms of biological role, NDH-1 shuttles electrons from NADH, via FMN and iron-sulfur (Fe-S) centers, to quinones in the respiratory chain. The immediate electron acceptor for the enzyme in this species is believed to be ubiquinone. Couples the redox reaction to proton translocation (for every two electrons transferred, four hydrogen ions are translocated across the cytoplasmic membrane), and thus conserves the redox energy in a proton gradient. This is NADH-quinone oxidoreductase subunit B from Geobacter metallireducens (strain ATCC 53774 / DSM 7210 / GS-15).